The chain runs to 345 residues: Acetylserotonin O-methyltransferase (345 aa).

Residues Y147, W164, D210, 235–237 (GDF), and R252 each bind S-adenosyl-L-methionine. H255 acts as the Proton donor/acceptor in catalysis. Substrate is bound by residues D256, N302, and Q306.

It belongs to the class I-like SAM-binding methyltransferase superfamily. Cation-independent O-methyltransferase family. In terms of assembly, homodimer. As to expression, expressed in the pineal gland (at protein level). Not detectable in retina, nor in liver.

The enzyme catalyses N-acetylserotonin + S-adenosyl-L-methionine = melatonin + S-adenosyl-L-homocysteine + H(+). It functions in the pathway aromatic compound metabolism; melatonin biosynthesis; melatonin from serotonin: step 1/2. Catalyzes the transfer of a methyl group onto N-acetylserotonin, producing melatonin (N-acetyl-5-methoxytryptamine). This chain is Acetylserotonin O-methyltransferase (ASMT), found in Bos taurus (Bovine).